The chain runs to 201 residues: Recombination protein RecR (201 aa).

Residues 60-75 form a C4-type zinc finger; sequence CSRCGNVDTVDPCTVC. Positions 83-178 constitute a Toprim domain; that stretch reads SVIIVVEDVA…KITRLAHGVP (96 aa).

It belongs to the RecR family.

May play a role in DNA repair. It seems to be involved in an RecBC-independent recombinational process of DNA repair. It may act with RecF and RecO. The sequence is that of Recombination protein RecR from Rhizobium rhizogenes (strain K84 / ATCC BAA-868) (Agrobacterium radiobacter).